The chain runs to 123 residues: Small ribosomal subunit protein uS12 (123 aa).

The residue at position 89 (Asp-89) is a 3-methylthioaspartic acid.

This sequence belongs to the universal ribosomal protein uS12 family. Part of the 30S ribosomal subunit. Contacts proteins S8 and S17. May interact with IF1 in the 30S initiation complex.

With S4 and S5 plays an important role in translational accuracy. Functionally, interacts with and stabilizes bases of the 16S rRNA that are involved in tRNA selection in the A site and with the mRNA backbone. Located at the interface of the 30S and 50S subunits, it traverses the body of the 30S subunit contacting proteins on the other side and probably holding the rRNA structure together. The combined cluster of proteins S8, S12 and S17 appears to hold together the shoulder and platform of the 30S subunit. The chain is Small ribosomal subunit protein uS12 from Orientia tsutsugamushi (strain Ikeda) (Rickettsia tsutsugamushi).